The sequence spans 80 residues: HssA/B-like protein 2 (80 aa).

The segment at 1–29 (MSLLSALTSISKPMNTSSKSSVSSKNVSG) is disordered. Low complexity predominate over residues 9 to 29 (SISKPMNTSSKSSVSSKNVSG).

This sequence belongs to the hssA/B family.

The chain is HssA/B-like protein 2 (hssl2) from Dictyostelium discoideum (Social amoeba).